Here is a 447-residue protein sequence, read N- to C-terminus: Zinc finger protein ZIC 1 (447 aa).

The segment at 225–260 adopts a C2H2-type 1; atypical zinc-finger fold; it reads LICKWIEPEQLANPKKSCNKTFSTMHELVTHVTVEH. The segment at 269-296 adopts a C2H2-type 2; atypical zinc-finger fold; it reads HICFWEECPREGKPFKAKYKLVNHIRVH. 3 C2H2-type zinc fingers span residues 302–326, 332–356, and 362–384; these read FPCP…KRTH, FKCE…MHVH, and YLCK…MKVH. The tract at residues 375–434 is disordered; it reads SSLRKHMKVHESSSQGSQPSPAASSGYESSTPPTIVSPTTDNPTTSSMSPSSSAVHHTAG. Residues 386-427 are compositionally biased toward low complexity; that stretch reads SSSQGSQPSPAASSGYESSTPPTIVSPTTDNPTTSSMSPSSS.

This sequence belongs to the GLI C2H2-type zinc-finger protein family. Interacts (via the C2H2-type domains 3, 4 and 5) with MDFIC (via the C2H2-type domains 3, 4 and 5). Interacts with GLI1; the interaction enhances transcription activation. Interacts with GLI2. Interacts with GLI3; the interaction enhances transcription activation. As to expression, expressed in osteoblasts (at protein level). Expressed in the CNS. A high level expression is seen in the cerebellum, while a low level expression is seen in the olfactory bulb, diencephalon, and brainstem. Expressed in lumbar spine and iliac crest.

Its subcellular location is the nucleus. It is found in the cytoplasm. Acts as a transcriptional activator. Involved in neurogenesis. Plays important roles in the early stage of organogenesis of the CNS, as well as during dorsal spinal cord development and maturation of the cerebellum. Involved in the spatial distribution of mossy fiber (MF) neurons within the pontine gray nucleus (PGN). Plays a role in the regulation of MF axon pathway choice. Promotes MF migration towards ipsilaterally-located cerebellar territories. May have a role in shear flow mechanotransduction in osteocytes. Retains nuclear GLI1 and GLI3 in the cytoplasm. Binds to the minimal GLI-consensus sequence 5'-TGGGTGGTC-3'. The sequence is that of Zinc finger protein ZIC 1 (Zic1) from Mus musculus (Mouse).